A 380-amino-acid polypeptide reads, in one-letter code: Sialidase-2 (380 aa).

The FRIP motif signature appears at 20-23; the sequence is YRIP. Substrate contacts are provided by Arg21 and Arg41. Catalysis depends on Asp46, which acts as the Proton acceptor. The stretch at 127–138 is one BNR 1 repeat; the sequence is VTSTDHGRTWSS. Tyr179 and Tyr181 together coordinate substrate. One copy of the BNR 2 repeat lies at 197–208; that stretch reads FLSHDHGRTWAR. Substrate is bound by residues Glu218, Arg237, and Arg304. Catalysis depends on Tyr334, which acts as the Nucleophile. Glu355 is a catalytic residue.

Belongs to the glycosyl hydrolase 33 family. In terms of tissue distribution, expressed in skeletal muscle, fetal liver and embryonic carcinoma cell line NT2-D1.

It localises to the cytoplasm. The protein localises to the cytosol. The catalysed reaction is Hydrolysis of alpha-(2-&gt;3)-, alpha-(2-&gt;6)-, alpha-(2-&gt;8)- glycosidic linkages of terminal sialic acid residues in oligosaccharides, glycoproteins, glycolipids, colominic acid and synthetic substrates.. It catalyses the reaction a ganglioside GD1a + H2O = a ganglioside GM1 + N-acetylneuraminate. The enzyme catalyses a ganglioside GM1 + H2O = a ganglioside GA1 + N-acetylneuraminate. It carries out the reaction a ganglioside GT1b + H2O = a ganglioside GD1b + N-acetylneuraminate. The catalysed reaction is a ganglioside GD1b + H2O = a ganglioside GM1 + N-acetylneuraminate. It catalyses the reaction a ganglioside GD3 + H2O = a ganglioside GM3 + N-acetylneuraminate. The enzyme catalyses a ganglioside GM3 + H2O = a beta-D-galactosyl-(1-&gt;4)-beta-D-glucosyl-(1&lt;-&gt;1)-ceramide + N-acetylneuraminate. It carries out the reaction a ganglioside GM2 + H2O = a ganglioside GA2 + N-acetylneuraminate. The catalysed reaction is a neolactoside IV(3)-alpha-NeuAc-nLc4Cer(d18:1(4E)) + H2O = a neolactoside nLc4Cer(d18:1(4E)) + N-acetylneuraminate. It catalyses the reaction N-acetyl-alpha-neuraminosyl-(2-&gt;3)-beta-D-galactosyl-(1-&gt;4)-D-glucose + H2O = lactose + N-acetylneuraminate. Functionally, exo-alpha-sialidase that catalyzes the hydrolytic cleavage of the terminal sialic acid (N-acetylneuraminic acid, Neu5Ac) of a glycan moiety in the catabolism of glycolipids, glycoproteins and oligosacharides. Recognizes sialyl linkage positions of the glycan moiety as well as the supramolecular organization of the sialoglycoconjugate. Displays preference for alpha-(2-&gt;3)-sialylated GD1a and GT1B gangliosides over alpha-(2-&gt;8)-sialylated GD1b, in both monomeric forms and micelles. Hydrolyzes monomeric GM1 ganglioside, but has no activity toward the miscellar form. Has lower sialidase activity for glycoproteins such as fetuin and TF/transferrin that carry a mixture of alpha-(2-&gt;3) and alpha-(2-&gt;6)-sialyl linkages. Cleaves milk oligosaccharide alpha-(2-&gt;3)-sialyllactose, but is inactive toward alpha-(2-&gt;6)-sialyllactose isomer. Has no activity toward colominic acid, a homomer of alpha-(2-&gt;8)-linked Neu5Ac residues. The chain is Sialidase-2 (NEU2) from Homo sapiens (Human).